The following is a 125-amino-acid chain: Large-conductance mechanosensitive channel (125 aa).

3 consecutive transmembrane segments (helical) span residues 19 to 39 (VGVI…KYII), 42 to 62 (FLGL…IGNA), and 66 to 86 (VGSF…VFLM).

The protein belongs to the MscL family. As to quaternary structure, homopentamer.

It localises to the cell membrane. Functionally, channel that opens in response to stretch forces in the membrane lipid bilayer. May participate in the regulation of osmotic pressure changes within the cell. This chain is Large-conductance mechanosensitive channel, found in Ligilactobacillus salivarius (strain UCC118) (Lactobacillus salivarius).